A 131-amino-acid chain; its full sequence is UPF0102 protein YraN (131 aa).

Polar residues predominate over residues 1 to 19 (MATVPTRSGSPRQLTTKQT). The interval 1–20 (MATVPTRSGSPRQLTTKQTG) is disordered.

It belongs to the UPF0102 family.

The chain is UPF0102 protein YraN from Escherichia coli O157:H7.